A 186-amino-acid chain; its full sequence is Adenine phosphoribosyltransferase (186 aa).

It belongs to the purine/pyrimidine phosphoribosyltransferase family. Homodimer.

The protein localises to the cytoplasm. The catalysed reaction is AMP + diphosphate = 5-phospho-alpha-D-ribose 1-diphosphate + adenine. It functions in the pathway purine metabolism; AMP biosynthesis via salvage pathway; AMP from adenine: step 1/1. Functionally, catalyzes a salvage reaction resulting in the formation of AMP, that is energically less costly than de novo synthesis. The chain is Adenine phosphoribosyltransferase from Xanthomonas euvesicatoria pv. vesicatoria (strain 85-10) (Xanthomonas campestris pv. vesicatoria).